The following is a 347-amino-acid chain: NADH-ubiquinone oxidoreductase chain 2 (347 aa).

11 helical membrane passes run 3-23 (PMTF…VLLS), 25-45 (HWFM…PVLM), 59-79 (YFLT…INTM), 96-116 (ILIT…FWVP), 127-147 (GLIL…QIYP), 149-169 (LNTN…GWGG), 178-198 (IMAY…TYNP), 201-221 (SLLN…LLII), 239-259 (IVTT…PLTG), 274-294 (NSLI…FFYM), and 326-346 (TAPL…LITL).

Belongs to the complex I subunit 2 family. As to quaternary structure, core subunit of respiratory chain NADH dehydrogenase (Complex I) which is composed of 45 different subunits. Interacts with TMEM242.

It is found in the mitochondrion inner membrane. The catalysed reaction is a ubiquinone + NADH + 5 H(+)(in) = a ubiquinol + NAD(+) + 4 H(+)(out). Its function is as follows. Core subunit of the mitochondrial membrane respiratory chain NADH dehydrogenase (Complex I) which catalyzes electron transfer from NADH through the respiratory chain, using ubiquinone as an electron acceptor. Essential for the catalytic activity and assembly of complex I. The sequence is that of NADH-ubiquinone oxidoreductase chain 2 from Sylvisorex ollula (Greater forest shrew).